A 398-amino-acid chain; its full sequence is NADH-quinone oxidoreductase subunit D (398 aa).

The protein belongs to the complex I 49 kDa subunit family. As to quaternary structure, NDH-1 is composed of 14 different subunits. Subunits NuoB, C, D, E, F, and G constitute the peripheral sector of the complex.

The protein localises to the cell inner membrane. The catalysed reaction is a quinone + NADH + 5 H(+)(in) = a quinol + NAD(+) + 4 H(+)(out). In terms of biological role, NDH-1 shuttles electrons from NADH, via FMN and iron-sulfur (Fe-S) centers, to quinones in the respiratory chain. The immediate electron acceptor for the enzyme in this species is believed to be ubiquinone. Couples the redox reaction to proton translocation (for every two electrons transferred, four hydrogen ions are translocated across the cytoplasmic membrane), and thus conserves the redox energy in a proton gradient. This Anaplasma marginale (strain St. Maries) protein is NADH-quinone oxidoreductase subunit D.